Consider the following 130-residue polypeptide: MYADSGPDPLPDDQVCLVVEVFRMLADATRVQVLWSLADREMSVNELAEQVGKPAPSVSQHLAKLRMARLVRTRRDGTTIFYRLENEHVRQLVIDAVFNAEHAGPGIPRHHRAAGGLQSVAKASATKDVG.

Residues 10–104 (LPDDQVCLVV…DAVFNAEHAG (95 aa)) enclose the HTH arsR-type domain. Residues 44 to 67 (VNELAEQVGKPAPSVSQHLAKLRM) constitute a DNA-binding region (H-T-H motif). Residues 110 to 130 (HHRAAGGLQSVAKASATKDVG) are disordered.

With respect to regulation, binding to DNA is inhibited by nickel and cobalt ions. Functionally, represses expression of Rv2025c and its own expression. Acts by binding to the promoter regions. The protein is HTH-type transcriptional regulator KmtR (kmtR) of Mycobacterium tuberculosis (strain ATCC 25618 / H37Rv).